The chain runs to 125 residues: Prefoldin subunit beta (125 aa).

Belongs to the prefoldin subunit beta family. As to quaternary structure, heterohexamer of two alpha and four beta subunits.

It localises to the cytoplasm. Its function is as follows. Molecular chaperone capable of stabilizing a range of proteins. Seems to fulfill an ATP-independent, HSP70-like function in archaeal de novo protein folding. The polypeptide is Prefoldin subunit beta (Pyrobaculum calidifontis (strain DSM 21063 / JCM 11548 / VA1)).